We begin with the raw amino-acid sequence, 1564 residues long: Nucleoporin nup184 (1564 aa).

Its subcellular location is the nucleus. The protein resides in the nuclear pore complex. Functionally, interacts with pom152 in the core structure of the nuclear pore complex (NPC). Involved in the export of mRNA. This chain is Nucleoporin nup184 (nup184), found in Schizosaccharomyces pombe (strain 972 / ATCC 24843) (Fission yeast).